Reading from the N-terminus, the 134-residue chain is MESFVAMKVVCITVLFVIVAVNESATSEARTSSAAKETKKKNVTLHFPSYIRNPQKLALELLEICKNNKSRNSLPSTNYSAINDKYVDFKNCTFLCKHAEDRNVTLDLPPNTLCGPNGETCAEKSKCVGHIPGC.

Residues 1–21 (MESFVAMKVVCITVLFVIVAV) form the signal peptide. N-linked (GlcNAc...) asparagine glycosylation is present at Asn22. Positions 48 to 67 (PSYIRNPQKLALELLEICKN) are required for Borrelia OspC-binding. Asn91 and Asn103 each carry an N-linked (GlcNAc...) asparagine glycan. The tract at residues 115 to 134 (GPNGETCAEKSKCVGHIPGC) is CD4-binding.

It belongs to the salp15 family. Monomer. Interacts with host CD4. Interacts with host DC-SIGN (CD209). As to quaternary structure, (Microbial infection) Interacts with Borrelia outer surface protein C (OspC). As to expression, expressed in salivary glands. Detected in fed adult female.

It localises to the secreted. Functionally, salivary tick protein that downregulates host immune system by binding to both dendritic cells, and CD4(+) T cells. Specifically binds to the CD4 coreceptor on T cells. This interaction prevents the activation of the Src kinase, Lck, and its downstream substrate Zap-70, and results in deficient activation of PLCgamma1, the repression of calcium fluxes triggered by T-cell antigen receptor (TCR) ligation, and a subsequent reduction in interleukin-2 production. This salivary protein also binds to DC-SIGN (CD209) on dendritic cells (DC) and activates the Raf-1 kinase/MEK signaling pathway that results in down-regulating expression of pro-inflammatory cytokines. Furthermore, it inhibits T cell proliferation induced by DCs. In addition, it inhibits in vitro keratinocyte inflammation induced by Borrelia burgdorferi or by the major outer surface protein (OspC) of Borrelia. In addition, it downregulates chemokines and monocyte chemoattractant protein 1, as well as several antimicrobial peptides such as defensins, cathelicidin, psoriasin, and RNase 7. Apart from its immunomodulatory activities, it is also associated with protection of Borrelia spirochetes from antibody-mediated killing through its binding to OspC. In vivo, tests on different immune disease animal models show promising therapeutic results, e.g., in inhibiting HIV infection, experimental autoimmune encephalomyelitis, transplantation rejection, and asthma. In terms of biological role, (Microbial infection) Protects Borrelia garinii (strain VSBP) from host complement-mediated killing by binding to the surface of spirochetes and preventing deposition of host C5b-9 membrane attack complexes. Protects Borrelia garinii (strain A87S) from host complement-mediated killing. Its function is as follows. (Microbial infection) Partially protects Borrelia burgdorferi (strains VS215 and B31) from host complement-mediated killing. The polypeptide is Salivary protein 15 Iric-1 (Ixodes ricinus (Common tick)).